Here is a 311-residue protein sequence, read N- to C-terminus: Homeobox protein Hox-B1a (311 aa).

Residues glutamine 217–glutamate 276 constitute a DNA-binding region (homeobox). The segment at asparagine 267 to serine 311 is disordered. Over residues serine 298–serine 311 the composition is skewed to low complexity.

Belongs to the Antp homeobox family. Labial subfamily.

Its subcellular location is the nucleus. Functionally, sequence-specific transcription factor which is part of a developmental regulatory system that provides cells with specific positional identities on the anterior-posterior axis. The sequence is that of Homeobox protein Hox-B1a (hoxb1a) from Danio rerio (Zebrafish).